A 626-amino-acid polypeptide reads, in one-letter code: Leucine-rich repeat and fibronectin type-III domain-containing protein 3 (626 aa).

An N-terminal signal peptide occupies residues 1-16; sequence MAVLPLLLCLLPLAPA. Over 17-539 the chain is Extracellular; the sequence is SSPPQPATSS…PHAPFLGGTM (523 aa). Residues 19-59 enclose the LRRNT domain; it reads PPQPATSSPCPRRCRCQTQSLPLSVLCPGAGLLFVPPSLDR. 6 LRR repeats span residues 84 to 105, 108 to 129, 132 to 153, 157 to 178, 181 to 202, and 205 to 226; these read GLLHLSLSRNTIRHVAAGAFAD, ALRALHLDGNRLTSLGEGQLRG, NLRHLILSNNQLAALAAGALDD, TLEDLDLSYNNLEQLPWEALGR, NVNTLGLDHNLLASVPAGAFSR, and KLARLDMTSNRLTTIPPDPLFS. The 47-residue stretch at 249-295 folds into the LRRCT domain; it reads NPLHCNCELVWLRRLAREDDLEACASPPALGGRYFWAVGEEEFVCEP. One can recognise an Ig-like domain in the interval 295 to 382; the sequence is PPVVTHRSPP…GEATAAVELT (88 aa). Residues 308–395 enclose the Fibronectin type-III 1 domain; sequence PAGRPAALRC…PPPPQLANST (88 aa). The cysteines at positions 317 and 366 are disulfide-linked. N-linked (GlcNAc...) asparagine glycans are attached at residues Asn-339, Asn-348, and Asn-393. The interval 382–423 is disordered; it reads TVGPPPPPQLANSTSCDPPRDGEPDALTPPSAASASAKVADT. Residues 406 to 423 are compositionally biased toward low complexity; it reads DALTPPSAASASAKVADT. A Fibronectin type-III 2 domain is found at 425–523; that stretch reads APTDRGVQVT…GCARFSTEPA (99 aa). A helical membrane pass occupies residues 540 to 560; the sequence is IIALGGVIVASVLVFIFVLLL. The Cytoplasmic portion of the chain corresponds to 561–626; the sequence is RYKVHGVQPP…WGPSHEPAGP (66 aa).

Belongs to the LRFN family. As to quaternary structure, can form heteromeric complexes with LRFN1, LRFN2, LRFN4 and LRFN5. Able to form homomeric complexes across cell junctions, between adjacent cells. Does not interact with DLG4. In terms of processing, N-glycosylated. Expressed in brain. Within brain, expressed in hippocampus, cerebellum, olfactory bulb and forebrain (at protein level).

Its subcellular location is the cell membrane. It is found in the cell projection. The protein resides in the axon. The protein localises to the dendrite. It localises to the synapse. Its subcellular location is the presynaptic cell membrane. It is found in the postsynaptic cell membrane. Functionally, cell adhesion molecule that mediates homophilic cell-cell adhesion in a Ca(2+)-independent manner. Promotes neurite outgrowth in hippocampal neurons. In Rattus norvegicus (Rat), this protein is Leucine-rich repeat and fibronectin type-III domain-containing protein 3.